Here is a 164-residue protein sequence, read N- to C-terminus: Large ribosomal subunit protein bL17 (164 aa).

The disordered stretch occupies residues 127 to 164; that stretch reads RARTDSVPARKGAGKKDASRVSGTVPDGQSQKIGKKKE.

This sequence belongs to the bacterial ribosomal protein bL17 family. In terms of assembly, part of the 50S ribosomal subunit. Contacts protein L32.

The sequence is that of Large ribosomal subunit protein bL17 from Treponema pallidum (strain Nichols).